A 488-amino-acid polypeptide reads, in one-letter code: Kelch-like protein 15 (488 aa).

The region spanning 31-98 (LDVTLVIEDH…MYYGTIELSM (68 aa)) is the BTB domain. The 105-residue stretch at 133 to 237 (CAEIMRLLDD…TPSSVFEKVK (105 aa)) folds into the BACK domain. Kelch repeat units lie at residues 328 to 379 (FVFL…VIGR), 381 to 426 (VYAV…VLGN), and 428 to 473 (LYIT…NKCK).

As to quaternary structure, homodimer. Interacts with CUL3.

It localises to the nucleus. The protein operates within protein modification; protein ubiquitination. Functionally, substrate-specific adapter for CUL3 E3 ubiquitin-protein ligase complex. In Gallus gallus (Chicken), this protein is Kelch-like protein 15 (KLHL15).